A 216-amino-acid chain; its full sequence is NKG2-D type II integral membrane protein (216 aa).

Over 1-51 (MGWIRGRRSRHSWEMSEFHNYNLDLAKNDFSTRWQKQRCPVIKSKCRENTS) the chain is Cytoplasmic. The helical; Signal-anchor for type II membrane protein transmembrane segment at 52 to 72 (PLFFCCFIAVAMGIRFIVMVT) threads the bilayer. Topologically, residues 73-216 (IWSAVFLNSL…NTYICMQRTV (144 aa)) are extracellular. 2 cysteine pairs are disulfide-bonded: cysteine 96/cysteine 105 and cysteine 99/cysteine 110. In terms of domain architecture, C-type lectin spans 98–213 (PCPKNWICYK…STPNTYICMQ (116 aa)). 4 N-linked (GlcNAc...) asparagine glycosylation sites follow: asparagine 115, asparagine 131, asparagine 163, and asparagine 202. 2 disulfides stabilise this stretch: cysteine 127–cysteine 211 and cysteine 189–cysteine 203.

In terms of assembly, homodimer; disulfide-linked. Heterohexamer composed of two subunits of KLRK1 and four subunits of HCST/DAP10. Interacts (via transmembrane domain) with HCST/DAP10 (via transmembrane domain); the interaction is required for KLRK1 NK cell surface and induces NK cell-mediated cytotoxicity. Can form disulfide-bonded heterodimer with CD94. Interacts with CEACAM1; recruits PTPN6 that dephosphorylates VAV1.

Its subcellular location is the cell membrane. Functions as an activating and costimulatory receptor involved in immunosurveillance upon binding to various cellular stress-inducible ligands displayed at the surface of autologous tumor cells and virus-infected cells. Provides both stimulatory and costimulatory innate immune responses on activated killer (NK) cells, leading to cytotoxic activity. Acts as a costimulatory receptor for T-cell receptor (TCR) in CD8(+) T-cell-mediated adaptive immune responses by amplifying T-cell activation. Stimulates perforin-mediated elimination of ligand-expressing tumor cells. Signaling involves calcium influx, culminating in the expression of TNF-alpha. Participates in NK cell-mediated bone marrow graft rejection. May play a regulatory role in differentiation and survival of NK cells. Binds to ligands belonging to various subfamilies of MHC class I-related glycoproteins. The sequence is that of NKG2-D type II integral membrane protein (KLRK1) from Pongo pygmaeus (Bornean orangutan).